We begin with the raw amino-acid sequence, 547 residues long: Chaperonin GroEL (547 aa).

ATP-binding positions include 30–33 (TLGP), lysine 51, 87–91 (DGTTT), glycine 415, 479–481 (NAA), and aspartate 495. Residues 524-547 (APKKDEPTPPAAGGGMGGMGGMDF) form a disordered region. Residues 535-547 (AGGGMGGMGGMDF) show a composition bias toward gly residues.

Belongs to the chaperonin (HSP60) family. As to quaternary structure, forms a cylinder of 14 subunits composed of two heptameric rings stacked back-to-back. Interacts with the co-chaperonin GroES.

Its subcellular location is the cytoplasm. It catalyses the reaction ATP + H2O + a folded polypeptide = ADP + phosphate + an unfolded polypeptide.. In terms of biological role, together with its co-chaperonin GroES, plays an essential role in assisting protein folding. The GroEL-GroES system forms a nano-cage that allows encapsulation of the non-native substrate proteins and provides a physical environment optimized to promote and accelerate protein folding. The chain is Chaperonin GroEL from Xylella fastidiosa (strain M23).